A 209-amino-acid polypeptide reads, in one-letter code: MIGLVGKKAGMTRIFTEDGVSIPVTVIEVEANRVTQVKDLANDGYRAIQVTTGAKKANRVTKPEAGHFAKAGVEAGRGLWEFRLAEGEEFTVGQSISVELFAEVKKVDVTGTSKGKGFAGTVKRWNFRTQDATHGNSLSHRVPGSIGQNQTPGKVFKGKKMAGQMGNERVTVQSLDVVRVDAERNLLLVKGAVPGATGSDLIVKPAVKA.

Residues 133–152 (THGNSLSHRVPGSIGQNQTP) form a disordered region. Q150 carries the N5-methylglutamine modification.

The protein belongs to the universal ribosomal protein uL3 family. As to quaternary structure, part of the 50S ribosomal subunit. Forms a cluster with proteins L14 and L19. In terms of processing, methylated by PrmB.

Functionally, one of the primary rRNA binding proteins, it binds directly near the 3'-end of the 23S rRNA, where it nucleates assembly of the 50S subunit. This is Large ribosomal subunit protein uL3 from Shigella sonnei (strain Ss046).